The following is a 342-amino-acid chain: UDP-N-acetylglucosamine--N-acetylmuramyl-(pentapeptide) pyrophosphoryl-undecaprenol N-acetylglucosamine transferase (342 aa).

UDP-N-acetyl-alpha-D-glucosamine-binding positions include 10-12 (TGG), Asn-124, Ser-177, and Gln-275.

Belongs to the glycosyltransferase 28 family. MurG subfamily.

The protein localises to the cell inner membrane. The catalysed reaction is di-trans,octa-cis-undecaprenyl diphospho-N-acetyl-alpha-D-muramoyl-L-alanyl-D-glutamyl-meso-2,6-diaminopimeloyl-D-alanyl-D-alanine + UDP-N-acetyl-alpha-D-glucosamine = di-trans,octa-cis-undecaprenyl diphospho-[N-acetyl-alpha-D-glucosaminyl-(1-&gt;4)]-N-acetyl-alpha-D-muramoyl-L-alanyl-D-glutamyl-meso-2,6-diaminopimeloyl-D-alanyl-D-alanine + UDP + H(+). The protein operates within cell wall biogenesis; peptidoglycan biosynthesis. Its function is as follows. Cell wall formation. Catalyzes the transfer of a GlcNAc subunit on undecaprenyl-pyrophosphoryl-MurNAc-pentapeptide (lipid intermediate I) to form undecaprenyl-pyrophosphoryl-MurNAc-(pentapeptide)GlcNAc (lipid intermediate II). This is UDP-N-acetylglucosamine--N-acetylmuramyl-(pentapeptide) pyrophosphoryl-undecaprenol N-acetylglucosamine transferase from Campylobacter jejuni (strain RM1221).